Here is a 471-residue protein sequence, read N- to C-terminus: Ribosomal protein uS12 methylthiotransferase RimO (471 aa).

The 116-residue stretch at 23–138 (PKIGFVSLGC…VMDAVHVHVP (116 aa)) folds into the MTTase N-terminal domain. [4Fe-4S] cluster-binding residues include cysteine 32, cysteine 68, cysteine 97, cysteine 169, cysteine 173, and cysteine 176. The Radical SAM core domain occupies 155-396 (LTPRHYAYLK…MAVAEAVSAE (242 aa)). The region spanning 399-471 (RERVGAEMQV…QGHDLVGQPL (73 aa)) is the TRAM domain.

It belongs to the methylthiotransferase family. RimO subfamily. The cofactor is [4Fe-4S] cluster.

It is found in the cytoplasm. The catalysed reaction is L-aspartate(89)-[ribosomal protein uS12]-hydrogen + (sulfur carrier)-SH + AH2 + 2 S-adenosyl-L-methionine = 3-methylsulfanyl-L-aspartate(89)-[ribosomal protein uS12]-hydrogen + (sulfur carrier)-H + 5'-deoxyadenosine + L-methionine + A + S-adenosyl-L-homocysteine + 2 H(+). In terms of biological role, catalyzes the methylthiolation of an aspartic acid residue of ribosomal protein uS12. The polypeptide is Ribosomal protein uS12 methylthiotransferase RimO (Methylibium petroleiphilum (strain ATCC BAA-1232 / LMG 22953 / PM1)).